A 1180-amino-acid chain; its full sequence is Tudor domain-containing protein 1 (1180 aa).

Disordered stretches follow at residues 1-66 and 79-138; these read MSVK…KKNN and SQED…RPAK. Over residues 27-41 the composition is skewed to basic and acidic residues; that stretch reads NFEKNENKLPPHESL. Polar residues-rich tracts occupy residues 79–91 and 110–122; these read SQEDNSVSSNPNG and NSVSPPSAESNSP. Cys-170, Cys-173, Cys-181, Cys-184, Cys-190, Cys-194, His-202, and Cys-206 together coordinate Zn(2+). An MYND-type zinc finger spans residues 170-206; that stretch reads CHRCGLFGSLRCSQCKQTYYCSTACQRRDWSAHSIVC. Residues 312 to 372 form the Tudor 1 domain; sequence IPVKGEVCIA…YHLNRNIDLF (61 aa). A disordered region spans residues 450-469; the sequence is SGQDSKKENADQSDPEDVGK. 3 consecutive Tudor domains span residues 541–600, 762–821, and 990–1048; these read YPAI…LLEL, KAEI…FLNL, and RPRI…HLAL.

Belongs to the TDRD1 family. As to quaternary structure, found in a mRNP complex, at least composed of TDRD1, TDRD6, TDRD7 and DDX4. Interacts with MAEL. Interacts with PIWIL1, PIWIL2 and PIWIL4 (when methylated on arginine residues). Interacts with TDRD12. As to expression, testis and ovary specific. Also expressed in several cancers.

It localises to the cytoplasm. Its function is as follows. Plays a central role during spermatogenesis by participating in the repression transposable elements and preventing their mobilization, which is essential for the germline integrity. Acts via the piRNA metabolic process, which mediates the repression of transposable elements during meiosis by forming complexes composed of piRNAs and Piwi proteins and governs the methylation and subsequent repression of transposons. Required for the localization of Piwi proteins to the meiotic nuage. Involved in the piRNA metabolic process by ensuring the entry of correct transcripts into the normal piRNA pool and limiting the entry of cellular transcripts into the piRNA pathway. May act by allowing the recruitment of piRNA biogenesis or loading factors that ensure the correct entry of transcripts and piRNAs into Piwi proteins. This is Tudor domain-containing protein 1 (TDRD1) from Homo sapiens (Human).